Here is a 359-residue protein sequence, read N- to C-terminus: MKSPFYRCQNTTSVEKGNSAVMGGVLFSTGLLGNLLALGLLARSGLGWCSRRPLRPLPSVFYMLVCGLTVTDLLGKCLLSPVVLAAYAQNRSLRVLAPALDNSLCQAFAFFMSFFGLSSTLQLLAMALECWLSLGHPFFYRRHITLRLGALVAPVVSAFSLAFCALPFMGFGKFVQYCPGTWCFIQMVHEEGSLSVLGYSVLYSSLMALLVLATVLCNLGAMRNLYAMHRRLQRHPRSCTRDCAEPRADGREASPQPLEELDHLLLLALMTVLFTMCSLPVIYRAYYGAFKDVKEKNRTSEEAEDLRALRFLSVISIVDPWIFIIFRSPVFRIFFHKIFIRPLRYRSRCSNSTNMESSL.

Over 1–21 (MKSPFYRCQNTTSVEKGNSAV) the chain is Extracellular. Residue asparagine 10 is glycosylated (N-linked (GlcNAc...) asparagine). The helical transmembrane segment at 22 to 42 (MGGVLFSTGLLGNLLALGLLA) threads the bilayer. The Cytoplasmic portion of the chain corresponds to 43-59 (RSGLGWCSRRPLRPLPS). A helical membrane pass occupies residues 60-80 (VFYMLVCGLTVTDLLGKCLLS). Residues 81–107 (PVVLAAYAQNRSLRVLAPALDNSLCQA) lie on the Extracellular side of the membrane. N-linked (GlcNAc...) asparagine glycosylation occurs at asparagine 90. An intrachain disulfide couples cysteine 105 to cysteine 183. The chain crosses the membrane as a helical span at residues 108 to 128 (FAFFMSFFGLSSTLQLLAMAL). Topologically, residues 129 to 150 (ECWLSLGHPFFYRRHITLRLGA) are cytoplasmic. The chain crosses the membrane as a helical span at residues 151 to 171 (LVAPVVSAFSLAFCALPFMGF). Residues 172 to 195 (GKFVQYCPGTWCFIQMVHEEGSLS) are Extracellular-facing. The chain crosses the membrane as a helical span at residues 196 to 216 (VLGYSVLYSSLMALLVLATVL). The Cytoplasmic portion of the chain corresponds to 217–262 (CNLGAMRNLYAMHRRLQRHPRSCTRDCAEPRADGREASPQPLEELD). Residues 263-283 (HLLLLALMTVLFTMCSLPVIY) traverse the membrane as a helical segment. The Extracellular portion of the chain corresponds to 284 to 310 (RAYYGAFKDVKEKNRTSEEAEDLRALR). N-linked (GlcNAc...) asparagine glycosylation occurs at asparagine 297. Residues 311–331 (FLSVISIVDPWIFIIFRSPVF) traverse the membrane as a helical segment. Residues 332-359 (RIFFHKIFIRPLRYRSRCSNSTNMESSL) are Cytoplasmic-facing.

It belongs to the G-protein coupled receptor 1 family. In terms of tissue distribution, expressed in retinal choroid, ciliary epithelium, longitudinal and circular ciliary muscles, iris, small intestine and platelet membranes.

It is found in the cell membrane. Receptor for prostaglandin D2 (PGD2). The activity of this receptor is mainly mediated by G(s) proteins that stimulate adenylate cyclase, resulting in an elevation of intracellular cAMP. A mobilization of calcium is also observed, but without formation of inositol 1,4,5-trisphosphate. Involved in PLA2G3-dependent maturation of mast cells. PLA2G3 is secreted by immature mast cells and acts on nearby fibroblasts upstream to PTDGS to synthesize PGD2, which in turn promotes mast cell maturation and degranulation via PTGDR. The sequence is that of Prostaglandin D2 receptor (PTGDR) from Homo sapiens (Human).